The sequence spans 405 residues: Formate-dependent phosphoribosylglycinamide formyltransferase (405 aa).

Residues 27–28 (EL) and Glu-87 each bind N(1)-(5-phospho-beta-D-ribosyl)glycinamide. ATP is bound by residues Arg-120, Lys-162, 167–172 (SSGKGQ), 202–205 (EGFI), and Glu-210. The region spanning 125 to 320 (RLAAETLGLP…EFELHARALL (196 aa)) is the ATP-grasp domain. Mg(2+) is bound by residues Glu-279 and Glu-291. N(1)-(5-phospho-beta-D-ribosyl)glycinamide-binding positions include Asp-298, Lys-367, and 374-375 (RR).

This sequence belongs to the PurK/PurT family. Homodimer.

The catalysed reaction is N(1)-(5-phospho-beta-D-ribosyl)glycinamide + formate + ATP = N(2)-formyl-N(1)-(5-phospho-beta-D-ribosyl)glycinamide + ADP + phosphate + H(+). Its pathway is purine metabolism; IMP biosynthesis via de novo pathway; N(2)-formyl-N(1)-(5-phospho-D-ribosyl)glycinamide from N(1)-(5-phospho-D-ribosyl)glycinamide (formate route): step 1/1. Involved in the de novo purine biosynthesis. Catalyzes the transfer of formate to 5-phospho-ribosyl-glycinamide (GAR), producing 5-phospho-ribosyl-N-formylglycinamide (FGAR). Formate is provided by PurU via hydrolysis of 10-formyl-tetrahydrofolate. The chain is Formate-dependent phosphoribosylglycinamide formyltransferase from Bordetella avium (strain 197N).